The sequence spans 272 residues: Nitrogenase iron protein (272 aa).

8-15 (GKGGIGKS) lines the ATP pocket. Position 94 (Cys94) interacts with [4Fe-4S] cluster. Arg97 is subject to ADP-ribosylarginine; by dinitrogenase reductase ADP-ribosyltransferase. Cys129 provides a ligand contact to [4Fe-4S] cluster.

It belongs to the NifH/BchL/ChlL family. Homodimer. Requires [4Fe-4S] cluster as cofactor. Post-translationally, the reversible ADP-ribosylation of Arg-97 inactivates the nitrogenase reductase and regulates nitrogenase activity.

It carries out the reaction N2 + 8 reduced [2Fe-2S]-[ferredoxin] + 16 ATP + 16 H2O = H2 + 8 oxidized [2Fe-2S]-[ferredoxin] + 2 NH4(+) + 16 ADP + 16 phosphate + 6 H(+). Its function is as follows. The key enzymatic reactions in nitrogen fixation are catalyzed by the nitrogenase complex, which has 2 components: the iron protein and the molybdenum-iron protein. The chain is Nitrogenase iron protein from Desulforamulus reducens (strain ATCC BAA-1160 / DSM 100696 / MI-1) (Desulfotomaculum reducens).